A 130-amino-acid polypeptide reads, in one-letter code: Riboflavin kinase (130 aa).

10-15 (GFGEGK) serves as a coordination point for CDP. Mg(2+) contacts are provided by threonine 39 and asparagine 41. FMN-binding residues include threonine 96 and glutamate 104. 109–112 (VNLR) contacts CDP.

Belongs to the archaeal riboflavin kinase family. Mg(2+) is required as a cofactor.

It catalyses the reaction riboflavin + CTP = CDP + FMN + H(+). The protein operates within cofactor biosynthesis; FMN biosynthesis; FMN from riboflavin (CTP route): step 1/1. Functionally, catalyzes the CTP-dependent phosphorylation of riboflavin (vitamin B2) to form flavin mononucleotide (FMN). The protein is Riboflavin kinase of Methanococcus vannielii (strain ATCC 35089 / DSM 1224 / JCM 13029 / OCM 148 / SB).